The sequence spans 47 residues: Defensin Tk-AMP-D1.1 (47 aa).

Intrachain disulfides connect cysteine 3-cysteine 47, cysteine 14-cysteine 34, cysteine 20-cysteine 41, and cysteine 24-cysteine 43.

In terms of biological role, plant defense peptide. The sequence is that of Defensin Tk-AMP-D1.1 from Triticum kiharae (Wheat).